The primary structure comprises 458 residues: Ribosomal protein uS12 methylthiotransferase RimO (458 aa).

The region spanning 26 to 136 (PRIGMVSLGC…VLDAVHGAVP (111 aa)) is the MTTase N-terminal domain. Residues C35, C71, C100, C167, C171, and C174 each coordinate [4Fe-4S] cluster. The 237-residue stretch at 153–389 (LTPRHYAYLK…MEKAQAISEA (237 aa)) folds into the Radical SAM core domain. A TRAM domain is found at 392-458 (QAKVGRTMQV…SEYDLWGKLT (67 aa)).

It belongs to the methylthiotransferase family. RimO subfamily. The cofactor is [4Fe-4S] cluster.

The protein resides in the cytoplasm. The catalysed reaction is L-aspartate(89)-[ribosomal protein uS12]-hydrogen + (sulfur carrier)-SH + AH2 + 2 S-adenosyl-L-methionine = 3-methylsulfanyl-L-aspartate(89)-[ribosomal protein uS12]-hydrogen + (sulfur carrier)-H + 5'-deoxyadenosine + L-methionine + A + S-adenosyl-L-homocysteine + 2 H(+). Catalyzes the methylthiolation of an aspartic acid residue of ribosomal protein uS12. This is Ribosomal protein uS12 methylthiotransferase RimO from Jannaschia sp. (strain CCS1).